A 249-amino-acid chain; its full sequence is Ubiquinone biosynthesis O-methyltransferase (249 aa).

The S-adenosyl-L-methionine site is built by Arg41, Gly72, Asp93, and Met136.

The protein belongs to the methyltransferase superfamily. UbiG/COQ3 family.

The enzyme catalyses a 3-demethylubiquinol + S-adenosyl-L-methionine = a ubiquinol + S-adenosyl-L-homocysteine + H(+). It carries out the reaction a 3-(all-trans-polyprenyl)benzene-1,2-diol + S-adenosyl-L-methionine = a 2-methoxy-6-(all-trans-polyprenyl)phenol + S-adenosyl-L-homocysteine + H(+). The protein operates within cofactor biosynthesis; ubiquinone biosynthesis. Its function is as follows. O-methyltransferase that catalyzes the 2 O-methylation steps in the ubiquinone biosynthetic pathway. This is Ubiquinone biosynthesis O-methyltransferase from Mesorhizobium japonicum (strain LMG 29417 / CECT 9101 / MAFF 303099) (Mesorhizobium loti (strain MAFF 303099)).